The sequence spans 227 residues: Cytochrome c oxidase subunit 2 (227 aa).

The Mitochondrial intermembrane segment spans residues 1–14 (MPYPLQLGLQDATS). Residues 15–45 (PIMEELTHFHDHTLMIVFLISSLVLYIISSM) traverse the membrane as a helical segment. Residues 46 to 59 (LTTKLTHTSTMDAQ) are Mitochondrial matrix-facing. Residues 60–87 (EVETIWTILPAMILILIALPSLRILYMM) traverse the membrane as a helical segment. Residues 88 to 227 (DEINDPSLTV…YFEDWSASLL (140 aa)) lie on the Mitochondrial intermembrane side of the membrane. H161, C196, E198, C200, H204, and M207 together coordinate Cu cation. Mg(2+) is bound at residue E198.

The protein belongs to the cytochrome c oxidase subunit 2 family. Component of the cytochrome c oxidase (complex IV, CIV), a multisubunit enzyme composed of 14 subunits. The complex is composed of a catalytic core of 3 subunits MT-CO1, MT-CO2 and MT-CO3, encoded in the mitochondrial DNA, and 11 supernumerary subunits COX4I, COX5A, COX5B, COX6A, COX6B, COX6C, COX7A, COX7B, COX7C, COX8 and NDUFA4, which are encoded in the nuclear genome. The complex exists as a monomer or a dimer and forms supercomplexes (SCs) in the inner mitochondrial membrane with NADH-ubiquinone oxidoreductase (complex I, CI) and ubiquinol-cytochrome c oxidoreductase (cytochrome b-c1 complex, complex III, CIII), resulting in different assemblies (supercomplex SCI(1)III(2)IV(1) and megacomplex MCI(2)III(2)IV(2)). Found in a complex with TMEM177, COA6, COX18, COX20, SCO1 and SCO2. Interacts with TMEM177 in a COX20-dependent manner. Interacts with COX20. Interacts with COX16. The cofactor is Cu cation.

It localises to the mitochondrion inner membrane. It carries out the reaction 4 Fe(II)-[cytochrome c] + O2 + 8 H(+)(in) = 4 Fe(III)-[cytochrome c] + 2 H2O + 4 H(+)(out). Its function is as follows. Component of the cytochrome c oxidase, the last enzyme in the mitochondrial electron transport chain which drives oxidative phosphorylation. The respiratory chain contains 3 multisubunit complexes succinate dehydrogenase (complex II, CII), ubiquinol-cytochrome c oxidoreductase (cytochrome b-c1 complex, complex III, CIII) and cytochrome c oxidase (complex IV, CIV), that cooperate to transfer electrons derived from NADH and succinate to molecular oxygen, creating an electrochemical gradient over the inner membrane that drives transmembrane transport and the ATP synthase. Cytochrome c oxidase is the component of the respiratory chain that catalyzes the reduction of oxygen to water. Electrons originating from reduced cytochrome c in the intermembrane space (IMS) are transferred via the dinuclear copper A center (CU(A)) of subunit 2 and heme A of subunit 1 to the active site in subunit 1, a binuclear center (BNC) formed by heme A3 and copper B (CU(B)). The BNC reduces molecular oxygen to 2 water molecules using 4 electrons from cytochrome c in the IMS and 4 protons from the mitochondrial matrix. The protein is Cytochrome c oxidase subunit 2 (MT-CO2) of Dugong dugon (Dugong).